A 618-amino-acid chain; its full sequence is Grainyhead-like protein 1 homolog (618 aa).

A transcription activation region spans residues 1 to 91 (MTQEYDNKRP…EVEHPEPDHS (91 aa)). Over residues 74 to 92 (RRSSTAKPEVEHPEPDHSK) the composition is skewed to basic and acidic residues. The interval 74-94 (RRSSTAKPEVEHPEPDHSKRN) is disordered. Threonine 208 bears the Phosphothreonine mark. One can recognise a Grh/CP2 DB domain in the interval 248-474 (SGNNFEYTLE…DLDTQPVLFI (227 aa)). Interaction with DNA regions lie at residues 380–389 (TDFSSQKGVK) and 427–430 (RKIR).

This sequence belongs to the grh/CP2 family. Grainyhead subfamily. Binds DNA as homodimer. Homodimer, also forms heterodimers with GRHL2 or GRHL3. In terms of processing, methylation at Arg-9 and Lys-116 may be involved in regulating transcriptional activation. Isoform 1 is highly expressed in brain, pancreas, tonsil, placenta and kidney. Isoform 2 is highly expressed in brain and liver. Expressed at very low levels in non-steroidogenic cells.

The protein localises to the nucleus. In terms of biological role, transcription factor involved in epithelial development. Binds directly to the consensus DNA sequence 5'-AACCGGTT-3'. Important regulator of DSG1 in the context of hair anchorage and epidermal differentiation, participates in the maintenance of the skin barrier. There is no genetic interaction with GRHL3, nor functional cooperativity due to diverse target gene selectivity during epithelia development. May play a role in regulating glucose homeostasis and insulin signaling. Functions as a transcription activator. Its function is as follows. May function as a repressor in tissues where both isoform 1 and isoform 2 are expressed. The polypeptide is Grainyhead-like protein 1 homolog (Homo sapiens (Human)).